A 735-amino-acid chain; its full sequence is Catalase-peroxidase (735 aa).

The tryptophyl-tyrosyl-methioninium (Trp-Tyr) (with M-246) cross-link spans 97 to 220 (WHAAGTYRIG…LAAVQMGLIY (124 aa)). Catalysis depends on histidine 98, which acts as the Proton acceptor. A cross-link (tryptophyl-tyrosyl-methioninium (Tyr-Met) (with W-97)) is located at residues 220–246 (YVNPEGPNGKPDPMAAAHDIRETFGRM). Histidine 261 is a binding site for heme b. Residues 342–362 (AHQWTPKNPEAASTVPDAHDP) form a disordered region.

It belongs to the peroxidase family. Peroxidase/catalase subfamily. Homodimer or homotetramer. Heme b serves as cofactor. Post-translationally, formation of the three residue Trp-Tyr-Met cross-link is important for the catalase, but not the peroxidase activity of the enzyme.

It carries out the reaction H2O2 + AH2 = A + 2 H2O. It catalyses the reaction 2 H2O2 = O2 + 2 H2O. Its function is as follows. Bifunctional enzyme with both catalase and broad-spectrum peroxidase activity. The protein is Catalase-peroxidase of Gloeobacter violaceus (strain ATCC 29082 / PCC 7421).